Consider the following 299-residue polypeptide: uncharacterized protein (299 aa).

Active-site charge relay system residues include Thr-47 and Tyr-109. Catalysis depends on Tyr-138, which acts as the Proton donor. Residue Lys-168 is the Schiff-base intermediate with substrate of the active site.

Belongs to the DapA family. Homotetramer.

It localises to the cytoplasm. This is an uncharacterized protein from Chloroflexus aurantiacus (strain ATCC 29366 / DSM 635 / J-10-fl).